The sequence spans 259 residues: Glucosamine-6-phosphate deaminase (259 aa).

The active-site Proton acceptor; for enolization step is the Asp-66. Asp-135 (for ring-opening step) is an active-site residue. The Proton acceptor; for ring-opening step role is filled by His-137. Catalysis depends on Glu-142, which acts as the For ring-opening step.

The protein belongs to the glucosamine/galactosamine-6-phosphate isomerase family. NagB subfamily.

The enzyme catalyses alpha-D-glucosamine 6-phosphate + H2O = beta-D-fructose 6-phosphate + NH4(+). It functions in the pathway amino-sugar metabolism; N-acetylneuraminate degradation; D-fructose 6-phosphate from N-acetylneuraminate: step 5/5. Its function is as follows. Catalyzes the reversible isomerization-deamination of glucosamine 6-phosphate (GlcN6P) to form fructose 6-phosphate (Fru6P) and ammonium ion. This is Glucosamine-6-phosphate deaminase from Pseudarthrobacter chlorophenolicus (strain ATCC 700700 / DSM 12829 / CIP 107037 / JCM 12360 / KCTC 9906 / NCIMB 13794 / A6) (Arthrobacter chlorophenolicus).